Consider the following 158-residue polypeptide: NAD(P)H-quinone oxidoreductase subunit J, chloroplastic (158 aa).

The protein belongs to the complex I 30 kDa subunit family. NDH is composed of at least 16 different subunits, 5 of which are encoded in the nucleus.

Its subcellular location is the plastid. It is found in the chloroplast thylakoid membrane. It carries out the reaction a plastoquinone + NADH + (n+1) H(+)(in) = a plastoquinol + NAD(+) + n H(+)(out). The catalysed reaction is a plastoquinone + NADPH + (n+1) H(+)(in) = a plastoquinol + NADP(+) + n H(+)(out). NDH shuttles electrons from NAD(P)H:plastoquinone, via FMN and iron-sulfur (Fe-S) centers, to quinones in the photosynthetic chain and possibly in a chloroplast respiratory chain. The immediate electron acceptor for the enzyme in this species is believed to be plastoquinone. Couples the redox reaction to proton translocation, and thus conserves the redox energy in a proton gradient. The protein is NAD(P)H-quinone oxidoreductase subunit J, chloroplastic of Lupinus luteus (European yellow lupine).